A 1141-amino-acid polypeptide reads, in one-letter code: Eukaryotic translation initiation factor 3 subunit A (1141 aa).

In terms of domain architecture, PCI spans 319–501; the sequence is LQRMAAHVLL…NSIYFGTDLT (183 aa). Composition is skewed to basic and acidic residues over residues 588–623 and 829–899; these read QNNA…EERE and AAEE…RGGD. 2 disordered regions span residues 588 to 631 and 829 to 1141; these read QNNA…QNEI and AAEE…VKRR. Phosphoserine is present on serine 908. Composition is skewed to basic and acidic residues over residues 920–976, 990–1051, 1059–1087, and 1110–1131; these read ERND…EPDT, SRDD…EPQR, DAPR…RGDQ, and TREE…KAGD.

Belongs to the eIF-3 subunit A family. As to quaternary structure, component of the eukaryotic translation initiation factor 3 (eIF-3) complex. The eIF-3 complex interacts with pix.

The protein resides in the cytoplasm. In terms of biological role, RNA-binding component of the eukaryotic translation initiation factor 3 (eIF-3) complex, which is involved in protein synthesis of a specialized repertoire of mRNAs and, together with other initiation factors, stimulates binding of mRNA and methionyl-tRNAi to the 40S ribosome. The eIF-3 complex specifically targets and initiates translation of a subset of mRNAs involved in cell proliferation. The protein is Eukaryotic translation initiation factor 3 subunit A of Drosophila sechellia (Fruit fly).